The following is a 261-amino-acid chain: Cytochrome c oxidase subunit 3 (261 aa).

Over 1–15 the chain is Mitochondrial matrix; it reads MAHQAHAYHMVDPSP. Residues 16 to 34 form a helical membrane-spanning segment; that stretch reads WPLTGAIGALFLTSGLAIW. Topologically, residues 35 to 40 are mitochondrial intermembrane; sequence FHFQSV. The chain crosses the membrane as a helical span at residues 41–66; the sequence is TLLTLGLILLLLTMYQWWRDIIREGT. The Mitochondrial matrix portion of the chain corresponds to 67-72; that stretch reads FQGHHT. A helical membrane pass occupies residues 73–105; that stretch reads PPVQKGLRYGMILFITSEVFFFLGFFWAFYHSS. Residues 106-128 are Mitochondrial intermembrane-facing; it reads LAPTPELGGCWPPTGITPLDPFE. Residues 129–152 form a helical membrane-spanning segment; the sequence is VPLLNTAVLLASGVTVTWAHHSLM. The Mitochondrial matrix portion of the chain corresponds to 153–155; it reads EGA. The helical transmembrane segment at 156–183 threads the bilayer; that stretch reads RKQAIQALALTIILGVYFTALQAMEYYE. At 184 to 190 the chain is on the mitochondrial intermembrane side; it reads APFTIAD. The helical transmembrane segment at 191–223 threads the bilayer; that stretch reads GVYGSTFFVATGFHGLHVIIGSSFLAVCLLRQI. Residues 224-232 lie on the Mitochondrial matrix side of the membrane; the sequence is QYHFTSEHH. The chain crosses the membrane as a helical span at residues 233–256; the sequence is FGFEAAAWYWHFVDVVWLFLYVSI. The Mitochondrial intermembrane segment spans residues 257-261; that stretch reads YWWGS.

It belongs to the cytochrome c oxidase subunit 3 family. Component of the cytochrome c oxidase (complex IV, CIV), a multisubunit enzyme composed of 14 subunits. The complex is composed of a catalytic core of 3 subunits MT-CO1, MT-CO2 and MT-CO3, encoded in the mitochondrial DNA, and 11 supernumerary subunits COX4I, COX5A, COX5B, COX6A, COX6B, COX6C, COX7A, COX7B, COX7C, COX8 and NDUFA4, which are encoded in the nuclear genome. The complex exists as a monomer or a dimer and forms supercomplexes (SCs) in the inner mitochondrial membrane with NADH-ubiquinone oxidoreductase (complex I, CI) and ubiquinol-cytochrome c oxidoreductase (cytochrome b-c1 complex, complex III, CIII), resulting in different assemblies (supercomplex SCI(1)III(2)IV(1) and megacomplex MCI(2)III(2)IV(2)).

It is found in the mitochondrion inner membrane. It carries out the reaction 4 Fe(II)-[cytochrome c] + O2 + 8 H(+)(in) = 4 Fe(III)-[cytochrome c] + 2 H2O + 4 H(+)(out). In terms of biological role, component of the cytochrome c oxidase, the last enzyme in the mitochondrial electron transport chain which drives oxidative phosphorylation. The respiratory chain contains 3 multisubunit complexes succinate dehydrogenase (complex II, CII), ubiquinol-cytochrome c oxidoreductase (cytochrome b-c1 complex, complex III, CIII) and cytochrome c oxidase (complex IV, CIV), that cooperate to transfer electrons derived from NADH and succinate to molecular oxygen, creating an electrochemical gradient over the inner membrane that drives transmembrane transport and the ATP synthase. Cytochrome c oxidase is the component of the respiratory chain that catalyzes the reduction of oxygen to water. Electrons originating from reduced cytochrome c in the intermembrane space (IMS) are transferred via the dinuclear copper A center (CU(A)) of subunit 2 and heme A of subunit 1 to the active site in subunit 1, a binuclear center (BNC) formed by heme A3 and copper B (CU(B)). The BNC reduces molecular oxygen to 2 water molecules using 4 electrons from cytochrome c in the IMS and 4 protons from the mitochondrial matrix. The chain is Cytochrome c oxidase subunit 3 (mt-co3) from Formosania lacustris (Oriental stream loach).